A 142-amino-acid chain; its full sequence is 3-hydroxyacyl-[acyl-carrier-protein] dehydratase FabZ (142 aa).

The active site involves His-48.

The protein belongs to the thioester dehydratase family. FabZ subfamily.

The protein localises to the cytoplasm. It catalyses the reaction a (3R)-hydroxyacyl-[ACP] = a (2E)-enoyl-[ACP] + H2O. Functionally, involved in unsaturated fatty acids biosynthesis. Catalyzes the dehydration of short chain beta-hydroxyacyl-ACPs and long chain saturated and unsaturated beta-hydroxyacyl-ACPs. This Prochlorococcus marinus (strain MIT 9313) protein is 3-hydroxyacyl-[acyl-carrier-protein] dehydratase FabZ.